Here is a 428-residue protein sequence, read N- to C-terminus: Spliceosome RNA helicase DDX39B (428 aa).

The segment covering 1 to 19 has biased composition (acidic residues); the sequence is MAENDVDNELLDYEEDEVE. The segment at 1 to 35 is disordered; that stretch reads MAENDVDNELLDYEEDEVENAAGGDGSEAPPKKDV. The Q motif signature appears at 45 to 73; sequence SGFRDFLLKPELLRAIVDCGFEHPSEVQH. The region spanning 76–249 is the Helicase ATP-binding domain; it reads IPQAILGMDV…RKFMQDPMEI (174 aa). 89–96 contacts ATP; that stretch reads AKSGMGKT. Residues 196–199 carry the DECD box motif; sequence DECD. Positions 261–422 constitute a Helicase C-terminal domain; sequence GLQQYYVKLK…ELPDEIDISS (162 aa).

Belongs to the DEAD box helicase family. DECD subfamily. Component of the transcription/export (TREX) complex at least composed of ALYREF/THOC4, DDX39B, SARNP/CIP29, CHTOP and the THO subcomplex.

It localises to the nucleus. The protein resides in the nucleus speckle. The catalysed reaction is ATP + H2O = ADP + phosphate + H(+). In terms of biological role, involved in nuclear export of spliced and unspliced mRNA. Component of the TREX complex which is thought to couple mRNA transcription, processing and nuclear export, and specifically associates with spliced mRNA and not with unspliced pre-mRNA. The TREX complex is recruited to spliced mRNAs by a transcription-independent mechanism, binds to mRNA upstream of the exon-junction complex (EJC) and is recruited in a splicing- and cap-dependent manner to a region near the 5' end of the mRNA where it functions in mRNA export to the cytoplasm via the TAP/NXF1 pathway. Involved in transcription elongation and genome stability. Functionally, splice factor that is required for the first ATP-dependent step in spliceosome assembly and for the interaction of U2 snRNP with the branchpoint. Has both RNA-stimulated ATP binding/hydrolysis activity and ATP-dependent RNA unwinding activity. Even with the stimulation of RNA, the ATPase activity is weak. Can only hydrolyze ATP but not other NTPs. The RNA stimulation of ATPase activity does not have a strong preference for the sequence and length of the RNA. However, ssRNA stimulates the ATPase activity much more strongly than dsRNA. Can unwind 5' or 3' overhangs or blunt end RNA duplexes in vitro. The ATPase and helicase activities are not influenced by U2AF2; the effect of ALYREF/THOC4 is reported conflictingly. The chain is Spliceosome RNA helicase DDX39B (DDX39B) from Gallus gallus (Chicken).